We begin with the raw amino-acid sequence, 488 residues long: Probable (S)-N-methylcoclaurine 3'-hydroxylase isozyme 2 (488 aa).

The helical transmembrane segment at 2-21 threads the bilayer; the sequence is EVLSIAIVSFSFLLFLFFIL. Cysteine 427 contributes to the heme binding site.

The protein belongs to the cytochrome P450 family. The cofactor is heme. Expressed at low levels in roots.

It localises to the endoplasmic reticulum membrane. Its subcellular location is the microsome membrane. The catalysed reaction is (S)-N-methylcoclaurine + reduced [NADPH--hemoprotein reductase] + O2 = (S)-3'-hydroxy-N-methylcoclaurine + oxidized [NADPH--hemoprotein reductase] + H2O + H(+). It participates in alkaloid biosynthesis; (S)-reticuline biosynthesis; (S)-reticuline from (S)-norcoclaurine: step 3/4. Its function is as follows. 3'-hydroxylation of (S)-N-methylcoclaurine. The polypeptide is Probable (S)-N-methylcoclaurine 3'-hydroxylase isozyme 2 (CYP80B2) (Coptis japonica (Japanese goldthread)).